The sequence spans 365 residues: Prostaglandin E2 receptor EP3 subtype (365 aa).

At 1-30 (MAGVWAPEHSVEAHSNQSSAADGCGSVSVA) the chain is on the extracellular side. Asn16 is a glycosylation site (N-linked (GlcNAc...) asparagine). The chain crosses the membrane as a helical span at residues 31-55 (FPITMMVTGFVGNALAMLLVVRSYR). The Cytoplasmic portion of the chain corresponds to 56 to 68 (RRESKRKKSFLLC). A helical transmembrane segment spans residues 69-89 (IGWLALTDLVGQLLTSPVVIL). Residues 90 to 108 (VYLSQRRWEQLDPSGRLCT) are Extracellular-facing. A disulfide bridge connects residues Cys107 and Cys184. Residues 109–130 (FFGLTMTVFGLSSLLVASAMAV) traverse the membrane as a helical segment. Residues 131–151 (ERALAIRAPHWYASHMKTRAT) are Cytoplasmic-facing. The chain crosses the membrane as a helical span at residues 152-173 (PVLLGVWLSVLAFALLPVLGVG). Over 174–203 (RYSVQWPGTWCFISTGPAGNETDSAREPGS) the chain is Extracellular. Residue Asn193 is glycosylated (N-linked (GlcNAc...) asparagine). The helical transmembrane segment at 204-229 (VAFASAFACLGLLALVVTFACNLATI) threads the bilayer. Topologically, residues 230–259 (KALVSRCRAKAAASQSSAQWGRITTETAIQ) are cytoplasmic. Residues 260–283 (LMGIMCVLSVCWSPLLIMMLKMIF) form a helical membrane-spanning segment. Over 284-303 (NQMSVEQCKTQMGKEKECNS) the chain is Extracellular. Residues 304–325 (FLIAVRLASLNQILDPWVYLLL) form a helical membrane-spanning segment. The Cytoplasmic portion of the chain corresponds to 326–365 (RKILLRKFCQIRDHTNYASSSTSLPCPGSSVLMWSDQLER).

Belongs to the G-protein coupled receptor 1 family. In terms of assembly, interacts (via C-terminus) with MKLN1. As to quaternary structure, does not interact with MKLN1. Principally expressed in the tubules of the renal medulla. Specific expression is seen in medullary and cortical thick ascending limbs; lower levels are detected in cortical and inner medullary collecting ducts. Not detected significantly in the glomeruli. In the brain, expressed in all types of glial cells.

It localises to the cell membrane. Its function is as follows. Receptor for prostaglandin E2 (PGE2). Required for normal development of fever in response to pyrinogens, including IL1B, prostaglandin E2 and bacterial lipopolysaccharide (LPS). Required for normal potentiation of platelet aggregation by prostaglandin E2, and thus plays a role in the regulation of blood coagulation. Required for increased HCO3(-) secretion in the duodenum in response to mucosal acidification, and thereby contributes to the protection of the mucosa against acid-induced ulceration. Not required for normal kidney function, normal urine volume and osmolality. In terms of biological role, receptor for prostaglandin E2 (PGE2); ligand binding activates a signaling cascade via G(i) proteins that leads to the inhibition of adenylate cyclase. Receptor for prostaglandin E2 (PGE2); ligand binding can activate several distinct signaling cascades, resulting in activation or inhibition of adenylate cyclase. The chain is Prostaglandin E2 receptor EP3 subtype (Ptger3) from Rattus norvegicus (Rat).